A 451-amino-acid chain; its full sequence is tRNA-2-methylthio-N(6)-dimethylallyladenosine synthase (451 aa).

An MTTase N-terminal domain is found at 3–120; it reads KKLFIQTHGC…LPEMVNAAGK (118 aa). Cys-12, Cys-49, Cys-83, Cys-156, Cys-160, and Cys-163 together coordinate [4Fe-4S] cluster. A Radical SAM core domain is found at 142-374; it reads RVEGAEAFVS…QRRISQQAYD (233 aa). The region spanning 377–441 is the TRAM domain; that stretch reads LSMVGEVQRI…PNSLLGELVG (65 aa).

This sequence belongs to the methylthiotransferase family. MiaB subfamily. In terms of assembly, monomer. [4Fe-4S] cluster is required as a cofactor.

It is found in the cytoplasm. It carries out the reaction N(6)-dimethylallyladenosine(37) in tRNA + (sulfur carrier)-SH + AH2 + 2 S-adenosyl-L-methionine = 2-methylsulfanyl-N(6)-dimethylallyladenosine(37) in tRNA + (sulfur carrier)-H + 5'-deoxyadenosine + L-methionine + A + S-adenosyl-L-homocysteine + 2 H(+). In terms of biological role, catalyzes the methylthiolation of N6-(dimethylallyl)adenosine (i(6)A), leading to the formation of 2-methylthio-N6-(dimethylallyl)adenosine (ms(2)i(6)A) at position 37 in tRNAs that read codons beginning with uridine. This Marinomonas sp. (strain MWYL1) protein is tRNA-2-methylthio-N(6)-dimethylallyladenosine synthase.